Consider the following 249-residue polypeptide: DNA repair protein RecO (249 aa).

It belongs to the RecO family.

Functionally, involved in DNA repair and RecF pathway recombination. The sequence is that of DNA repair protein RecO from Mycoplasma mycoides subsp. mycoides SC (strain CCUG 32753 / NCTC 10114 / PG1).